Here is a 255-residue protein sequence, read N- to C-terminus: 3-deoxy-manno-octulosonate cytidylyltransferase (255 aa).

The protein belongs to the KdsB family.

The protein resides in the cytoplasm. It carries out the reaction 3-deoxy-alpha-D-manno-oct-2-ulosonate + CTP = CMP-3-deoxy-beta-D-manno-octulosonate + diphosphate. Its pathway is nucleotide-sugar biosynthesis; CMP-3-deoxy-D-manno-octulosonate biosynthesis; CMP-3-deoxy-D-manno-octulosonate from 3-deoxy-D-manno-octulosonate and CTP: step 1/1. It functions in the pathway bacterial outer membrane biogenesis; lipopolysaccharide biosynthesis. In terms of biological role, activates KDO (a required 8-carbon sugar) for incorporation into bacterial lipopolysaccharide in Gram-negative bacteria. The chain is 3-deoxy-manno-octulosonate cytidylyltransferase from Thermodesulfovibrio yellowstonii (strain ATCC 51303 / DSM 11347 / YP87).